A 212-amino-acid polypeptide reads, in one-letter code: Imidazole glycerol phosphate synthase subunit HisH (212 aa).

A Glutamine amidotransferase type-1 domain is found at 3–212 (SIAVVDYGMG…LLSNFLKWTP (210 aa)). Cys-82 serves as the catalytic Nucleophile. Residues His-192 and Glu-194 contribute to the active site.

In terms of assembly, heterodimer of HisH and HisF.

It localises to the cytoplasm. The enzyme catalyses 5-[(5-phospho-1-deoxy-D-ribulos-1-ylimino)methylamino]-1-(5-phospho-beta-D-ribosyl)imidazole-4-carboxamide + L-glutamine = D-erythro-1-(imidazol-4-yl)glycerol 3-phosphate + 5-amino-1-(5-phospho-beta-D-ribosyl)imidazole-4-carboxamide + L-glutamate + H(+). It carries out the reaction L-glutamine + H2O = L-glutamate + NH4(+). It participates in amino-acid biosynthesis; L-histidine biosynthesis; L-histidine from 5-phospho-alpha-D-ribose 1-diphosphate: step 5/9. In terms of biological role, IGPS catalyzes the conversion of PRFAR and glutamine to IGP, AICAR and glutamate. The HisH subunit catalyzes the hydrolysis of glutamine to glutamate and ammonia as part of the synthesis of IGP and AICAR. The resulting ammonia molecule is channeled to the active site of HisF. The protein is Imidazole glycerol phosphate synthase subunit HisH of Nitrosomonas europaea (strain ATCC 19718 / CIP 103999 / KCTC 2705 / NBRC 14298).